The sequence spans 249 residues: Sugar fermentation stimulation protein homolog (249 aa).

It belongs to the SfsA family.

This chain is Sugar fermentation stimulation protein homolog, found in Synechococcus sp. (strain CC9902).